A 255-amino-acid polypeptide reads, in one-letter code: 5-oxoprolinase subunit A 1 (255 aa).

It belongs to the LamB/PxpA family. In terms of assembly, forms a complex composed of PxpA, PxpB and PxpC.

It carries out the reaction 5-oxo-L-proline + ATP + 2 H2O = L-glutamate + ADP + phosphate + H(+). Its function is as follows. Catalyzes the cleavage of 5-oxoproline to form L-glutamate coupled to the hydrolysis of ATP to ADP and inorganic phosphate. The sequence is that of 5-oxoprolinase subunit A 1 from Agrobacterium fabrum (strain C58 / ATCC 33970) (Agrobacterium tumefaciens (strain C58)).